Consider the following 1227-residue polypeptide: Methionine synthase (1227 aa).

One can recognise a Hcy-binding domain in the interval 2–325 (SSKVEQLRAQ…EHIAAMSRAV (324 aa)). Positions 247, 310, and 311 each coordinate Zn(2+). Residues 356–617 (FVNVGERTNV…LPAELRDAVE (262 aa)) form the Pterin-binding domain. Positions 650–744 (QQAEWRSWDV…FIEASKEKGS (95 aa)) constitute a B12-binding N-terminal domain. Methylcob(III)alamin-binding positions include Glu694, 756–760 (GDVHD), His759, Ser804, Thr808, and Ala860. A B12-binding domain is found at 746-881 (NGKMVIATVK…SDTQRDDFVA (136 aa)). An AdoMet activation domain is found at 897-1227 (KKPRTPPVTL…LAPNLGYDAD (331 aa)). Residues Asp946, Arg1134, and 1189 to 1190 (YF) contribute to the S-adenosyl-L-methionine site.

This sequence belongs to the vitamin-B12 dependent methionine synthase family. Methylcob(III)alamin is required as a cofactor. It depends on Zn(2+) as a cofactor.

The enzyme catalyses (6S)-5-methyl-5,6,7,8-tetrahydrofolate + L-homocysteine = (6S)-5,6,7,8-tetrahydrofolate + L-methionine. It functions in the pathway amino-acid biosynthesis; L-methionine biosynthesis via de novo pathway; L-methionine from L-homocysteine (MetH route): step 1/1. Functionally, catalyzes the transfer of a methyl group from methyl-cobalamin to homocysteine, yielding enzyme-bound cob(I)alamin and methionine. Subsequently, remethylates the cofactor using methyltetrahydrofolate. The chain is Methionine synthase (metH) from Salmonella typhimurium (strain LT2 / SGSC1412 / ATCC 700720).